A 513-amino-acid chain; its full sequence is uncharacterized protein (513 aa).

Disordered regions lie at residues 72–113 and 155–262; these read GVVP…TGQF and IMGG…NPRF. Positions 82–106 are enriched in low complexity; the sequence is ANRTANPNTNSNPNPNATNAQPNPT. Composition is skewed to polar residues over residues 164–189 and 210–228; these read EANS…QTQG and TPLN…EFQQ. A compositionally biased stretch (low complexity) spans 229-238; that stretch reads TTSPIFSSSS. A compositionally biased stretch (pro residues) spans 239 to 248; sequence TPPPPPPRPS. Over residues 253 to 262 the composition is skewed to polar residues; sequence GESQNTNPRF. The RING-type; atypical zinc finger occupies 396–437; that stretch reads CTICMEMFKINDDVIQLPCKHYFHENCIKPWLRVNGTCAICR. Residues 439–513 form a disordered region; sequence PVDPNSQQRN…DDFVDEEPLE (75 aa). Positions 442-493 are enriched in polar residues; that stretch reads PNSQQRNNTSTDSANGHNPSNHANPSTSTTNDQGATLRNESFNAASQSNLSS.

This is an uncharacterized protein from Schizosaccharomyces pombe (strain 972 / ATCC 24843) (Fission yeast).